Reading from the N-terminus, the 191-residue chain is Cyclin-dependent kinase inhibitor 1 (191 aa).

A disordered region spans residues 62–81 (LIHLEEEDKDGDTETSTYRR). Positions 162-191 (QLKEKFKKKYNFDFEKEKPLEGRYEWVKLE) are required for inhibitory function and interaction with CDK kinase complexes.

The protein belongs to the CDI family. ICK/KRP subfamily. As to quaternary structure, specifically interacts with CDKA-1, but not with CDKB1-1. Interacts with CYCD2-1 and CYCD3-1. Post-translationally, ubiquitinated independently by RKP and SCF (SKP1-CUL1-FBL5/SKP2B) protein ligase complex, leading to proteasomal degradation. Expressed at low levels in roots, stems, leaves and flowers.

It localises to the nucleus. It is found in the nucleoplasm. Its function is as follows. Binds and inhibits CYCD2-1/CDKA-1 kinase complex activity. Regulates cell division which is crucial for plant growth, development and morphogenesis. Functions in turning cells from a mitotic to an endoreplicating cell cycle mode. Acts cell- and non-cell-autonomously to regulate endoreduplication by allowing S phase progression, but blocking entry into mitosis. Keeps on the one hand the plant cell cycle locally controlled, and on the other hand provides a possibility of linking cell cycle control in single cells with the supracellular organization of a tissue or an organ. May target specifically CDKA-1. The chain is Cyclin-dependent kinase inhibitor 1 (KRP1) from Arabidopsis thaliana (Mouse-ear cress).